Here is a 166-residue protein sequence, read N- to C-terminus: MGFEDGFYTIRHLVEGQPPNIPGGMYASSKDGKDEPVTAEPLGPHSKIRWWIARYPEAGEDMYTITEFRVDESIPGQWARPHNEVGGPVYLYDRIRAEETGYVCEWRIQPAYEDVDGVFNIMGNSRIGSTDWADLREEGGKPQVYLKPVPVVPNMYIPRWFISKVD.

Residues 20–39 (NIPGGMYASSKDGKDEPVTA) form a disordered region.

The protein belongs to the protease inhibitor I85 family.

Its function is as follows. Inhibits papain and cysteine cathepsin endopeptidases, and also inhibits cathepsins B and H, which exhibit both exopeptidase and endopeptidase activities. This Macrolepiota procera (Parasol mushroom) protein is Macrocypin-5a.